The sequence spans 164 residues: Glutamate uptake regulatory protein (164 aa).

The 62-residue stretch at 5–66 folds into the HTH asnC-type domain; it reads LDDFDIKILD…LLDPQKIGLG (62 aa). A DNA-binding region (H-T-H motif) is located at residues 24–43; that stretch reads MAELSEKTGLSANACWRRIR.

In terms of biological role, represses the secondary, H(+)-coupled glutamate uptake system (Gluemp) genes. This Zymomonas mobilis subsp. mobilis (strain ATCC 31821 / ZM4 / CP4) protein is Glutamate uptake regulatory protein (grp).